The chain runs to 225 residues: Ribose-5-phosphate isomerase A (225 aa).

Substrate-binding positions include 33–36, 86–89, and 99–102; these read TGST, DGAD, and KGGG. Glu-108 acts as the Proton acceptor in catalysis. Lys-126 is a binding site for substrate.

It belongs to the ribose 5-phosphate isomerase family. As to quaternary structure, homodimer.

The enzyme catalyses aldehydo-D-ribose 5-phosphate = D-ribulose 5-phosphate. Its pathway is carbohydrate degradation; pentose phosphate pathway; D-ribose 5-phosphate from D-ribulose 5-phosphate (non-oxidative stage): step 1/1. Catalyzes the reversible conversion of ribose-5-phosphate to ribulose 5-phosphate. This is Ribose-5-phosphate isomerase A from Bordetella petrii (strain ATCC BAA-461 / DSM 12804 / CCUG 43448).